A 61-amino-acid chain; its full sequence is Small ribosomal subunit protein uS14 (61 aa).

4 residues coordinate Zn(2+): Cys-24, Cys-27, Cys-40, and Cys-43.

This sequence belongs to the universal ribosomal protein uS14 family. Zinc-binding uS14 subfamily. As to quaternary structure, part of the 30S ribosomal subunit. Contacts proteins S3 and S10. The cofactor is Zn(2+).

Binds 16S rRNA, required for the assembly of 30S particles and may also be responsible for determining the conformation of the 16S rRNA at the A site. This Halalkalibacterium halodurans (strain ATCC BAA-125 / DSM 18197 / FERM 7344 / JCM 9153 / C-125) (Bacillus halodurans) protein is Small ribosomal subunit protein uS14.